We begin with the raw amino-acid sequence, 347 residues long: Cell shape-determining protein MreB (347 aa).

ATP contacts are provided by residues 19 to 21, 168 to 170, 216 to 219, and 296 to 299; these read TAN, GGT, ERIK, and GGAL.

The protein belongs to the FtsA/MreB family. In terms of assembly, forms polymers.

It is found in the cytoplasm. In terms of biological role, forms membrane-associated dynamic filaments that are essential for cell shape determination. Acts by regulating cell wall synthesis and cell elongation, and thus cell shape. A feedback loop between cell geometry and MreB localization may maintain elongated cell shape by targeting cell wall growth to regions of negative cell wall curvature. This chain is Cell shape-determining protein MreB, found in Escherichia coli O6:H1 (strain CFT073 / ATCC 700928 / UPEC).